We begin with the raw amino-acid sequence, 398 residues long: Nocardicin C N-oxygenase (398 aa).

The tract at residues 63–90 (RARAAGREETPRVTPEAAPAGSMLSMDP) is disordered. The heme site is built by His-93, Arg-97, Arg-289, His-345, and Cys-347.

This sequence belongs to the cytochrome P450 family. Requires heme as cofactor.

It carries out the reaction nocardicin C + 4 reduced [2Fe-2S]-[ferredoxin] + 2 O2 + 2 H(+) = nocardicin A + 4 oxidized [2Fe-2S]-[ferredoxin] + 3 H2O. It functions in the pathway antibiotic biosynthesis. Functionally, involved in the biosynthesis of the beta-lactam antibiotic nocardicin A. Catalyzes the conversion of nocardicin C to nocardicin A. Cannot use nocardicin G. The protein is Nocardicin C N-oxygenase of Nocardia uniformis subsp. tsuyamanensis.